Reading from the N-terminus, the 467-residue chain is Neuromedin-K receptor (467 aa).

Topologically, residues 1–86 are extracellular; the sequence is MDSFAAAETW…TNQFVQPSWR (86 aa). Asn-23, Asn-50, and Asn-75 each carry an N-linked (GlcNAc...) asparagine glycan. The helical transmembrane segment at 87 to 109 threads the bilayer; the sequence is IALWSLAYGVVVAVAVFGNLIVI. Residues 110–119 are Cytoplasmic-facing; the sequence is WIILAHKRMR. The helical transmembrane segment at 120 to 141 threads the bilayer; it reads TVTNYFLVNLAFSDASMAAFNT. Topologically, residues 142-161 are extracellular; the sequence is LVNFIYALHSEWYFGANYCR. The cysteines at positions 160 and 235 are disulfide-linked. The helical transmembrane segment at 162 to 183 threads the bilayer; it reads FQNFFPITAVFASIYSMTAIAV. Topologically, residues 184–203 are cytoplasmic; the sequence is DRYMAIIDPLKPRLSATATK. The helical transmembrane segment at 204–224 threads the bilayer; that stretch reads IVIGSIWILAFLLALPQCLYS. Residues 225-247 are Extracellular-facing; that stretch reads KTKVMPGRTLCYVQWPEGPKQHF. A helical membrane pass occupies residues 248-272; it reads IYHIIVIILVYCFPLLIMGITYTIV. Over 273–301 the chain is Cytoplasmic; that stretch reads GITLWGGEIPGDTCDKYHEQLKAKRKVVK. The helical transmembrane segment at 302–323 threads the bilayer; that stretch reads MMIIVVVTFAICWLPYHIYFIL. The Extracellular portion of the chain corresponds to 324-336; that stretch reads TAIYQQLNRWKYI. The chain crosses the membrane as a helical span at residues 337–361; sequence QQVYLASFWLAMSSTMYNPIIYCCL. The Cytoplasmic portion of the chain corresponds to 362 to 467; the sequence is NKRFRAGFKR…SPYTSMEEYS (106 aa). Cys-376 carries the S-palmitoyl cysteine lipid modification. The tract at residues 416 to 467 is disordered; sequence DPSDADNTRSSRKKRATPGDPNFNGCSRRNSKSASTTSSFISSPYTSMEEYS. Residues 447–467 are compositionally biased toward low complexity; that stretch reads KSASTTSSFISSPYTSMEEYS.

Belongs to the G-protein coupled receptor 1 family.

Its subcellular location is the cell membrane. Its function is as follows. This is a receptor for the tachykinin neuropeptide neuromedin-K (neurokinin B). It is associated with G proteins that activate a phosphatidylinositol-calcium second messenger system. The polypeptide is Neuromedin-K receptor (TACR3) (Oryctolagus cuniculus (Rabbit)).